A 61-amino-acid chain; its full sequence is Small ribosomal subunit protein uS14 (61 aa).

Over residues 1-12 the composition is skewed to acidic residues; that stretch reads MSESETTDEPDS. The segment at 1 to 25 is disordered; sequence MSESETTDEPDSETASSERTGQLES. Zn(2+) contacts are provided by cysteine 26, cysteine 29, cysteine 44, and cysteine 47.

The protein belongs to the universal ribosomal protein uS14 family. Zinc-binding uS14 subfamily. Part of the 30S ribosomal subunit. It depends on Zn(2+) as a cofactor.

Functionally, binds 16S rRNA, required for the assembly of 30S particles. This is Small ribosomal subunit protein uS14 from Haloarcula marismortui (strain ATCC 43049 / DSM 3752 / JCM 8966 / VKM B-1809) (Halobacterium marismortui).